The following is a 282-amino-acid chain: Pantothenate synthetase (282 aa).

ATP is bound at residue 30–37; that stretch reads MGFLHDGH. The active-site Proton donor is the H37. Position 60 (Q60) interacts with (R)-pantoate. Position 60 (Q60) interacts with beta-alanine. Residue 146–149 participates in ATP binding; it reads GQKD. A (R)-pantoate-binding site is contributed by Q152. ATP is bound by residues I175 and 183–186; that span reads KSSR.

Belongs to the pantothenate synthetase family. As to quaternary structure, homodimer.

The protein resides in the cytoplasm. It catalyses the reaction (R)-pantoate + beta-alanine + ATP = (R)-pantothenate + AMP + diphosphate + H(+). It functions in the pathway cofactor biosynthesis; (R)-pantothenate biosynthesis; (R)-pantothenate from (R)-pantoate and beta-alanine: step 1/1. In terms of biological role, catalyzes the condensation of pantoate with beta-alanine in an ATP-dependent reaction via a pantoyl-adenylate intermediate. In Campylobacter jejuni subsp. jejuni serotype O:23/36 (strain 81-176), this protein is Pantothenate synthetase.